We begin with the raw amino-acid sequence, 138 residues long: Thioredoxin H2-1 (138 aa).

The tract at residues 1 to 20 (MGGAFSTSKPKPAAGEEGGE) is disordered. In terms of domain architecture, Thioredoxin spans 12 to 129 (PAAGEEGGES…LEKTINTLRS (118 aa)). Catalysis depends on nucleophile residues Cys-55 and Cys-58. An intrachain disulfide couples Cys-55 to Cys-58.

The protein belongs to the thioredoxin family. Plant H-type subfamily.

The protein resides in the cytoplasm. Probable thiol-disulfide oxidoreductase that may be involved in the redox regulation of a number of cytosolic enzymes. This Oryza sativa subsp. japonica (Rice) protein is Thioredoxin H2-1.